The primary structure comprises 546 residues: Chaperonin GroEL (546 aa).

ATP-binding positions include 30 to 33, K51, 87 to 91, G415, 479 to 481, and D495; these read TLGP, DGTTT, and NAA. The disordered stretch occupies residues 526–546; it reads KEDAPMPGGMPGGMGGMGMDM. The span at 534 to 546 shows a compositional bias: gly residues; that stretch reads GMPGGMGGMGMDM.

The protein belongs to the chaperonin (HSP60) family. As to quaternary structure, forms a cylinder of 14 subunits composed of two heptameric rings stacked back-to-back. Interacts with the co-chaperonin GroES.

It localises to the cytoplasm. The enzyme catalyses ATP + H2O + a folded polypeptide = ADP + phosphate + an unfolded polypeptide.. Functionally, together with its co-chaperonin GroES, plays an essential role in assisting protein folding. The GroEL-GroES system forms a nano-cage that allows encapsulation of the non-native substrate proteins and provides a physical environment optimized to promote and accelerate protein folding. This chain is Chaperonin GroEL, found in Burkholderia cepacia (Pseudomonas cepacia).